The following is a 184-amino-acid chain: UPF0301 protein RHOS4_26140 (184 aa).

Belongs to the UPF0301 (AlgH) family.

The chain is UPF0301 protein RHOS4_26140 from Cereibacter sphaeroides (strain ATCC 17023 / DSM 158 / JCM 6121 / CCUG 31486 / LMG 2827 / NBRC 12203 / NCIMB 8253 / ATH 2.4.1.) (Rhodobacter sphaeroides).